A 741-amino-acid chain; its full sequence is Cysteine--tRNA ligase, cytoplasmic (741 aa).

Position 46 (cysteine 46) interacts with Zn(2+). Residues 48-58 (PTVYDASHMGH) carry the 'HIGH' region motif. At serine 297 the chain carries Phosphoserine. Zn(2+) is bound by residues cysteine 340, histidine 365, and glutamate 369. The 'KMSKS' region signature appears at 398–402 (KMSKS). Lysine 401 provides a ligand contact to ATP. The interval 697–718 (FDENGLPTHDKEGKEVSKGQIK) is disordered. Basic and acidic residues predominate over residues 704–713 (THDKEGKEVS).

This sequence belongs to the class-I aminoacyl-tRNA synthetase family. Zn(2+) serves as cofactor.

It is found in the cytoplasm. It catalyses the reaction tRNA(Cys) + L-cysteine + ATP = L-cysteinyl-tRNA(Cys) + AMP + diphosphate. The chain is Cysteine--tRNA ligase, cytoplasmic from Drosophila melanogaster (Fruit fly).